The sequence spans 145 residues: Selenoprotein M (145 aa).

The signal sequence occupies residues 1–23 (MSLLLPPLALLLLLAALVAPATA). Residues cysteine 45 and selenocysteine 48 each act as nucleophile in the active site. The cysteinyl-selenocysteine (Cys-Sec) cross-link spans 45 to 48 (CGGU). A non-standard amino acid (selenocysteine) is located at residue selenocysteine 48.

Belongs to the selenoprotein M/F family. As to expression, widely expressed.

It localises to the cytoplasm. The protein localises to the perinuclear region. The protein resides in the endoplasmic reticulum. It is found in the golgi apparatus. Functionally, may function as a thiol-disulfide oxidoreductase that participates in disulfide bond formation. This is Selenoprotein M from Homo sapiens (Human).